A 609-amino-acid chain; its full sequence is Snake venom metalloproteinase-disintegrin-like mocarhagin (609 aa).

Residues 1–20 (MIQALLVAICLAVFPYQGSS) form the signal peptide. A propeptide spanning residues 21 to 191 (IILESGNVND…DEPIEKSSQL (171 aa)) is cleaved from the precursor. The Peptidase M12B domain occupies 205–400 (KYIEFYVVVD…DRPQCILNKP (196 aa)). Ca(2+) contacts are provided by Glu-208 and Asp-292. Residue Asn-303 is glycosylated (N-linked (GlcNAc...) asparagine). Disulfide bonds link Cys-316–Cys-395, Cys-356–Cys-379, and Cys-358–Cys-363. Zn(2+)-binding residues include His-341 and His-345. Ca(2+)-binding residues include Cys-395, Asn-398, Val-410, Asn-413, Phe-415, Glu-417, Glu-420, and Asp-423. The region spanning 408–494 (PPVCGNYFVE…KCPKDSFQRN (87 aa)) is the Disintegrin domain. Intrachain disulfides connect Cys-411–Cys-440, Cys-422–Cys-435, Cys-424–Cys-430, Cys-434–Cys-457, Cys-448–Cys-454, Cys-453–Cys-479, Cys-466–Cys-486, Cys-473–Cys-505, Cys-498–Cys-510, Cys-517–Cys-567, Cys-532–Cys-575, Cys-545–Cys-555, Cys-562–Cys-601, and Cys-595–Cys-606. The D/ECD-tripeptide motif lies at 472-474 (DCD). Residue Asn-507 is glycosylated (N-linked (GlcNAc...) asparagine).

This sequence belongs to the venom metalloproteinase (M12B) family. P-III subfamily. P-IIIa sub-subfamily. In terms of assembly, monomer. Requires Zn(2+) as cofactor. In terms of tissue distribution, expressed by the venom gland.

It localises to the secreted. Its activity is regulated as follows. Inhibited by EDTA and diisopropyl fluorophosphate (DFP). Also inhibited by an excess of zinc or calcium ions. Snake venom zinc metalloproteinase that inhibits platelet aggregation by cleaving platelet glycoprotein Ib alpha (GP1BA) at Glu-298/Asp-299, and abolishes binding of von Willebrand factor (VWF) to GPIBA. Cleaves P-selectin glycoprotein ligand-1 (PSGL-1/SELPLG) at Tyr-51/Asp-52, and completely abolishes the binding of PSGL-1 to P-selectin. Anionic amino acid sequences containing sulfated tyrosines are needed for cleavages. Inhibits the thrombin-induced platelet aggregation, and the thrombin-induced release of ATP and ADP. Has lectin activity (inhibited by heparin). The sequence is that of Snake venom metalloproteinase-disintegrin-like mocarhagin from Naja mossambica (Mozambique spitting cobra).